The sequence spans 1082 residues: Transcription elongation factor SPT5 (1082 aa).

Positions 1 to 28 are enriched in acidic residues; sequence MSDSEDSNFSEEEDSERSSEAEEAEVEE. Residues 1-88 form a disordered region; sequence MSDSEDSNFS…DVDDEYEDED (88 aa). 2 positions are modified to phosphoserine: S32 and S36. Acidic residues-rich tracts occupy residues 38–62 and 76–88; these read KEEE…EDDD and DEAD…EDED. Residue K141 forms a Glycyl lysine isopeptide (Lys-Gly) (interchain with G-Cter in SUMO2) linkage. Residues 174–268 are interaction with SUPT4H1 and SUPT4H2; sequence DPNLWTVKCK…TDVLKVVKEV (95 aa). The KOW 1 domain maps to 271–304; sequence LKPKSWVRLKRGIYKDDIAQVDYVEPSQNTISLK. The interval 311-418 is interaction with RNA polymerase II; it reads YDRIKARMSL…STGKEREHNF (108 aa). The UBR5-degron signature appears at 326-332; sequence KRKKFKR. KOW domains lie at 418-449 and 470-501; these read FQPG…ITIM and FKMG…VILF. K577 lines the RNA pocket. The KOW 4 domain occupies 592-625; that stretch reads IHVKDIVKVIDGPHSGREGEIRHLYRSFAFLHCK. R617 contacts DNA. T661 carries the phosphothreonine modification. S664 and S684 each carry phosphoserine. Residues 669 to 694 form a disordered region; the sequence is SPMHPSAEGQHGGFGSPGGMSRGRGR. Residues 678–690 show a composition bias toward gly residues; sequence QHGGFGSPGGMSR. Asymmetric dimethylarginine; alternate occurs at positions 690 and 692. Omega-N-methylarginine; alternate is present on residues R690 and R692. Residue R692 is modified to Symmetric dimethylarginine; alternate. One can recognise a KOW 5 domain in the interval 698-731; that stretch reads ELIGQTVRISQGPYKGYIGVVKDATESTARVELH. K712 is subject to N6-acetyllysine. Positions 741 to 801 are enriched in polar residues; sequence RQRLTTVDSQ…RTPHYGSQTP (61 aa). The tract at residues 741–972 is disordered; sequence RQRLTTVDSQ…GSGIEQNSSD (232 aa). A CTR1-1; approximate repeat occupies 748 to 753; it reads DSQRPG. The tract at residues 748 to 811 is 9 X 7 AA approximate tandem repeats of G-S-[QR]-T-P-X-[YQ], motif CTR1; the sequence is DSQRPGGMTS…LHDGSRTPAQ (64 aa). A CTR1-2 repeat occupies 754–759; it reads GMTSTY. The CTR1-3 repeat unit spans residues 760–765; it reads GRTPMY. Residues 766-772 form a CTR1-4 repeat; it reads GSQTPMY. Residues T769 and T778 each carry the phosphothreonine; by CDK9 modification. The CTR1-5 repeat unit spans residues 775 to 781; that stretch reads GSRTPMY. The CTR1-6 repeat unit spans residues 782 to 788; it reads GSQTPLQ. At S783 the chain carries Phosphoserine. Phosphothreonine is present on residues T785 and T793. One copy of the CTR1-7 repeat lies at 790 to 796; it reads GSRTPHY. The stretch at 797-803 is one CTR1-8 repeat; sequence GSQTPLH. S798 is subject to Phosphoserine. 2 positions are modified to phosphothreonine: T800 and T808. The CTR1-9 repeat unit spans residues 805–811; that stretch reads GSRTPAQ. Over residues 828 to 838 the composition is skewed to acidic residues; it reads EEYEYAFDDEP. The stretch at 838–845 is one CTR2-1 repeat; that stretch reads PTPSPQAY. Positions 838-944 are 10 X 8 AA approximate tandem repeats of P-[TS]-P-S-P-[QA]-[SG]-Y, motif CTR2; it reads PTPSPQAYGG…ASPSPSPVGY (107 aa). The stretch at 848–856 is one CTR2-2; approximate repeat; it reads TPNPQTPGY. Over residues 851–860 the composition is skewed to pro residues; that stretch reads PQTPGYPDPS. A CTR2-3; approximate repeat occupies 857–863; it reads PDPSSPQ. A compositionally biased stretch (polar residues) spans 861–884; sequence SPQVNPQYNPQTPGTPAMYNTDQF. The CTR2-4; half-length repeat unit spans residues 875–879; the sequence is TPAMY. One copy of the CTR2-5; approximate repeat lies at 890–896; that stretch reads PSPQGSY. Over residues 890–905 the composition is skewed to low complexity; sequence PSPQGSYQPSPSPQSY. The stretch at 898-905 is one CTR2-6 repeat; that stretch reads PSPSPQSY. A CTR2-7; approximate repeat occupies 910-915; that stretch reads PSPAGY. A CTR2-8 repeat occupies 918–924; sequence THSPASY. A CTR2-9 repeat occupies 926 to 933; sequence PTPSPMAY. The stretch at 937-944 is one CTR2-10 repeat; the sequence is PSPSPVGY. At T1028 the chain carries Phosphothreonine. K1031 is covalently cross-linked (Glycyl lysine isopeptide (Lys-Gly) (interchain with G-Cter in SUMO2)).

Belongs to the SPT5 family. As to quaternary structure, interacts with SUPT4H1 to form DSIF. DSIF interacts with the positive transcription elongation factor b complex (P-TEFb complex), which is composed of CDK9 and cyclin-T (CCNT1 or CCNT2). DSIF interacts with RNA polymerase II, and this interaction is reduced by phosphorylation of the C-terminal domain (CTD) of POLR2A by P-TEFb. DSIF also interacts with the NELF complex, which is composed of NELFA, NELFB, NELFD and NELFE, and this interaction occurs following prior binding of DSIF to RNA polymerase II. Also interacts with PRMT1/HRMT1L2, HTATSF1/TATSF1, RNGTT/CAP1A, PRMT5/SKB1, SUPT6H, and can interact with PIN1. Component of a complex which is at least composed of HTATSF1/Tat-SF1, the P-TEFb complex components CDK9 and CCNT1, RNA polymerase II, SUPT5H, and NCL/nucleolin. Interacts with MCM3AP. Post-translationally, methylated by PRMT1/HRMT1L2 and PRMT5/SKB1. Methylation negatively regulates interaction with P-TEFb and RNA polymerase II. Phosphorylated by CDK7 and CDK9. Phosphorylation by P-TEFb (CDK9) at Thr residues of the C-terminal repeats alleviates transcriptional pausing and promotes transcription elongation. Dephosphorylated by the INTAC complex when transcripts are unfavorably configured for transcriptional elongation, leading to premature transcription termination: dephosphorylation is mediated by the PPP2CA component of the INTAC complex. Dephosphorylated by the PNUTS-PP1 complex in termination zones downstream of poly(A) sites, thereby promoting deceleration of RNA polymerase II transcription. Dephosphorylated by the PNUTS-PP1 complex in termination zones downstream of poly(A) sites, thereby promoting deceleration of RNA polymerase II transcription. Phosphorylation may also stimulate interaction with PIN1. Bulk phosphorylation occurs predominantly in mitosis. In terms of processing, ubiquitinated by UBR5 when not assembled in the DSIF complex, leading to its degradation: UBR5 recognizes and binds a degron that is not accessible when SUPT5H is part of the DSIF complex.

It localises to the nucleus. Its function is as follows. Component of the DRB sensitivity-inducing factor complex (DSIF complex), which regulates mRNA processing and transcription elongation by RNA polymerase II. DSIF positively regulates mRNA capping by stimulating the mRNA guanylyltransferase activity of RNGTT/CAP1A. DSIF also acts cooperatively with the negative elongation factor complex (NELF complex) to enhance transcriptional pausing at sites proximal to the promoter. Transcriptional pausing may facilitate the assembly of an elongation competent RNA polymerase II complex. DSIF and NELF promote pausing by inhibition of the transcription elongation factor TFIIS/S-II. TFIIS/S-II binds to RNA polymerase II at transcription pause sites and stimulates the weak intrinsic nuclease activity of the enzyme. Cleavage of blocked transcripts by RNA polymerase II promotes the resumption of transcription from the new 3' terminus and may allow repeated attempts at transcription through natural pause sites. Following phosphorylation by CDK9, DSIF can also positively regulate transcriptional elongation. The polypeptide is Transcription elongation factor SPT5 (Supt5h) (Mus musculus (Mouse)).